Here is a 292-residue protein sequence, read N- to C-terminus: Shikimate dehydrogenase (NADP(+)) (292 aa).

Residues 22-24 and Ser-69 contribute to the shikimate site; that span reads SLS. Catalysis depends on Lys-73, which acts as the Proton acceptor. Asn-94 and Asp-111 together coordinate shikimate. Residues 135 to 139 and Ile-236 each bind NADP(+); that span reads GVGGA. Tyr-238 is a binding site for shikimate. An NADP(+)-binding site is contributed by Gly-260.

The protein belongs to the shikimate dehydrogenase family. In terms of assembly, homodimer.

The enzyme catalyses shikimate + NADP(+) = 3-dehydroshikimate + NADPH + H(+). Its pathway is metabolic intermediate biosynthesis; chorismate biosynthesis; chorismate from D-erythrose 4-phosphate and phosphoenolpyruvate: step 4/7. Functionally, involved in the biosynthesis of the chorismate, which leads to the biosynthesis of aromatic amino acids. Catalyzes the reversible NADPH linked reduction of 3-dehydroshikimate (DHSA) to yield shikimate (SA). In Streptococcus pyogenes serotype M18 (strain MGAS8232), this protein is Shikimate dehydrogenase (NADP(+)).